Reading from the N-terminus, the 170-residue chain is MRRWGMAKIAVVSLGGAGTSIMREMLGIASDFDAYNVNERRTLKNARYFGYEEMEALAEELSGYDCIIFTAGLGSRSGDALVDLYGMLDGVRRLCFLVTPFYFEIERLMRSRAQLGKIMTEDFEGAVLTLNSLLRDMEEAEPSKSKLEKLVRRFDREVASLIVEMMQEVR.

This is an uncharacterized protein from Archaeoglobus fulgidus (strain ATCC 49558 / DSM 4304 / JCM 9628 / NBRC 100126 / VC-16).